The primary structure comprises 456 residues: MNTVRETIAAIATAQGRGGVGIVRLSGPLAGKAGQLITGRTLTPRHAHYGPFRDDDGLVLDEGIALFFPGPNSFTGEDVLELQGHGGPVVLDMLLQRCVQVGCRLARPGEFSERAFLNDKLDLAQAEAIADLIEASSSQAARNALRSLQGEFSKRVHSLTEALIALRIYVEAAIDFPEEEIDFLADGHVLSMLDAVRGELSTVQREAGQGALLRDGMTVVIAGRPNAGKSSLLNQLAGREAAIVTDIAGTTRDILREHIHIDGMPLHVVDTAGLRDTDDHVEKIGVERALKAIGEADRVLLVVDSTAPEASDPFALWPEFLDQRPDPAKVTLIRNKADLSGEHVGLEQCDDGHVTITLSAKGDDTGLQLLRDHLKACMGYEQTAESGFSARRRHLDALRQASEHLEHGRAQLTLAGAGELLAEDLRQAQHALGEITGAFSSDDLLGRIFSSFCIGK.

Residues arginine 24, glutamate 81, and lysine 120 each coordinate (6S)-5-formyl-5,6,7,8-tetrahydrofolate. Residues 216–379 (GMTVVIAGRP…LRDHLKACMG (164 aa)) form the TrmE-type G domain. A K(+)-binding site is contributed by asparagine 226. Residues 226–231 (NAGKSS), 245–251 (TDIAGTT), 270–273 (DTAG), and 335–338 (NKAD) contribute to the GTP site. A Mg(2+)-binding site is contributed by serine 230. K(+) contacts are provided by threonine 245, isoleucine 247, and threonine 250. Residue threonine 251 coordinates Mg(2+). Residue lysine 456 coordinates (6S)-5-formyl-5,6,7,8-tetrahydrofolate.

Belongs to the TRAFAC class TrmE-Era-EngA-EngB-Septin-like GTPase superfamily. TrmE GTPase family. As to quaternary structure, homodimer. Heterotetramer of two MnmE and two MnmG subunits. It depends on K(+) as a cofactor.

It localises to the cytoplasm. In terms of biological role, exhibits a very high intrinsic GTPase hydrolysis rate. Involved in the addition of a carboxymethylaminomethyl (cmnm) group at the wobble position (U34) of certain tRNAs, forming tRNA-cmnm(5)s(2)U34. In Pseudomonas putida (strain GB-1), this protein is tRNA modification GTPase MnmE.